Consider the following 338-residue polypeptide: RAB6-interacting golgin (338 aa).

2 stretches are compositionally biased toward basic and acidic residues: residues 1–14 (MTEK…DEIL) and 46–59 (RMPD…DQLR). 2 disordered regions span residues 1-109 (MTEK…LNLD) and 127-188 (ARDK…SPFK). Composition is skewed to low complexity over residues 60 to 73 (KQQQ…IQKP) and 153 to 167 (SGGD…DDGS). Residues 192-244 (LKDFEQHRRMIEEQNKQKKQMLYQAIEQHTQKTAAESRKIEEIRHELSKLESD) adopt a coiled-coil conformation. An essential for Sas-6 binding region spans residues 244–260 (DLAVDVALLRKQIDNAC). Positions 246-286 (AVDVALLRKQIDNACIHFANVEKQYVKIEAQFLRAKIELHN) are necessary for localization to the centrosome. Residues 246–323 (AVDVALLRKQ…TELMQKVGLS (78 aa)) form a necessary for localization to the Golgi region. Residues 260–286 (CIHFANVEKQYVKIEAQFLRAKIELHN) are necessary for interaction with Sas-6 and essential for homodimerization.

Belongs to the GORAB family. As to quaternary structure, homodimer (via C-terminus); dimerization appears to be required for its trans-Golgi localization but not for its function and centriolar localization. Interacts (via C-terminus) with Rab6; binds Rab6 as a homodimer, this interaction seems to be required for trans-Golgi localization. Interacts (via C-terminus) with Sas-6; binds as a monomer to a Sas-6 homodimer.

The protein resides in the cytoplasm. Its subcellular location is the cytoskeleton. It is found in the microtubule organizing center. The protein localises to the centrosome. It localises to the centriole. The protein resides in the golgi apparatus. Its subcellular location is the trans-Golgi network. In terms of biological role, required for centriole duplication likely through its interaction with Sas-6. During embryogenesis, maternally provided protein is required for centrosome duplication and nuclear division cycles of the syncytial embryos. In femoral chordotonal organs, required for sensory cilia structural integrity and functionality necessary for motor coordination. In male germline, has a role in cytokinesis which seems dependent on its localization to the Golgi. In Drosophila melanogaster (Fruit fly), this protein is RAB6-interacting golgin.